A 235-amino-acid polypeptide reads, in one-letter code: Large ribosomal subunit protein uL1 (235 aa).

The protein belongs to the universal ribosomal protein uL1 family. As to quaternary structure, part of the 50S ribosomal subunit.

Functionally, binds directly to 23S rRNA. The L1 stalk is quite mobile in the ribosome, and is involved in E site tRNA release. Protein L1 is also a translational repressor protein, it controls the translation of the L11 operon by binding to its mRNA. The protein is Large ribosomal subunit protein uL1 of Methylibium petroleiphilum (strain ATCC BAA-1232 / LMG 22953 / PM1).